Here is a 98-residue protein sequence, read N- to C-terminus: Cell division topological specificity factor (98 aa).

The protein belongs to the MinE family.

Its function is as follows. Prevents the cell division inhibition by proteins MinC and MinD at internal division sites while permitting inhibition at polar sites. This ensures cell division at the proper site by restricting the formation of a division septum at the midpoint of the long axis of the cell. This is Cell division topological specificity factor from Nitrosomonas eutropha (strain DSM 101675 / C91 / Nm57).